A 73-amino-acid chain; its full sequence is Ocellatin-PT6 (73 aa).

The first 22 residues, 1 to 22 (MAFLKKSLFLVLFLGLVSLSIC), serve as a signal peptide directing secretion. Positions 23-39 (DEEKRQDEDDDDDDDEE) are excised as a propeptide.

Expressed by the skin glands.

The protein localises to the secreted. Functionally, has antibacterial activity against Gram-negative bacterium E.coli ATCC 25922 (MIC=120 uM) but not against S.pneumoniae ATCC 700603, S.choleraesuis ATCC 14028 or against Gram-positive bacterium S.aureus ATCC 29313. Shows no hemolytic activity and no cytotoxicity. The chain is Ocellatin-PT6 from Leptodactylus pustulatus (Ceara white-lipped frog).